Consider the following 289-residue polypeptide: Oxaloacetate decarboxylase (289 aa).

Residue Ser-47 coordinates substrate. Asp-85 contacts Mg(2+). Substrate contacts are provided by Arg-156 and His-232.

This sequence belongs to the isocitrate lyase/PEP mutase superfamily. Oxaloacetate decarboxylase family. As to quaternary structure, homotetramer; dimer of dimers. Mg(2+) serves as cofactor.

It carries out the reaction oxaloacetate + H(+) = pyruvate + CO2. Catalyzes the decarboxylation of oxaloacetate into pyruvate. Seems to play a role in maintaining cellular concentrations of bicarbonate and pyruvate. The sequence is that of Oxaloacetate decarboxylase from Rhodopseudomonas palustris (strain HaA2).